A 94-amino-acid polypeptide reads, in one-letter code: ATP synthase F(0) complex subunit f, mitochondrial (94 aa).

An N-acetylalanine modification is found at Ala2. Ser3 bears the Phosphoserine mark. N6-acetyllysine is present on Lys22. A helical membrane pass occupies residues 68 to 85 (MVLACYVLFSYSFSYKHL).

It belongs to the ATPase F chain family. As to quaternary structure, component of the ATP synthase complex composed at least of ATP5F1A/subunit alpha, ATP5F1B/subunit beta, ATP5MC1/subunit c (homooctomer), MT-ATP6/subunit a, MT-ATP8/subunit 8, ATP5ME/subunit e, ATP5MF/subunit f, ATP5MG/subunit g, ATP5MK/subunit k, ATP5MJ/subunit j, ATP5F1C/subunit gamma, ATP5F1D/subunit delta, ATP5F1E/subunit epsilon, ATP5PF/subunit F6, ATP5PB/subunit b, ATP5PD/subunit d, ATP5PO/subunit OSCP. ATP synthase complex consists of a soluble F(1) head domain (subunits alpha(3) and beta(3)) - the catalytic core - and a membrane F(0) domain - the membrane proton channel (subunits c, a, 8, e, f, g, k and j). These two domains are linked by a central stalk (subunits gamma, delta, and epsilon) rotating inside the F1 region and a stationary peripheral stalk (subunits F6, b, d, and OSCP).

The protein resides in the mitochondrion. It localises to the mitochondrion inner membrane. In terms of biological role, subunit f, of the mitochondrial membrane ATP synthase complex (F(1)F(0) ATP synthase or Complex V) that produces ATP from ADP in the presence of a proton gradient across the membrane which is generated by electron transport complexes of the respiratory chain. ATP synthase complex consist of a soluble F(1) head domain - the catalytic core - and a membrane F(1) domain - the membrane proton channel. These two domains are linked by a central stalk rotating inside the F(1) region and a stationary peripheral stalk. During catalysis, ATP synthesis in the catalytic domain of F(1) is coupled via a rotary mechanism of the central stalk subunits to proton translocation. In vivo, can only synthesize ATP although its ATP hydrolase activity can be activated artificially in vitro. Part of the complex F(0) domain. The chain is ATP synthase F(0) complex subunit f, mitochondrial from Homo sapiens (Human).